The primary structure comprises 360 residues: UDP-N-acetylglucosamine--N-acetylmuramyl-(pentapeptide) pyrophosphoryl-undecaprenol N-acetylglucosamine transferase (360 aa).

The UDP-N-acetyl-alpha-D-glucosamine site is built by Ser-198 and Gln-289.

The protein belongs to the glycosyltransferase 28 family. MurG subfamily.

The protein resides in the cell membrane. The enzyme catalyses Mur2Ac(oyl-L-Ala-gamma-D-Glu-L-Lys-D-Ala-D-Ala)-di-trans,octa-cis-undecaprenyl diphosphate + UDP-N-acetyl-alpha-D-glucosamine = beta-D-GlcNAc-(1-&gt;4)-Mur2Ac(oyl-L-Ala-gamma-D-Glu-L-Lys-D-Ala-D-Ala)-di-trans,octa-cis-undecaprenyl diphosphate + UDP + H(+). It participates in cell wall biogenesis; peptidoglycan biosynthesis. Functionally, cell wall formation. Catalyzes the transfer of a GlcNAc subunit on undecaprenyl-pyrophosphoryl-MurNAc-pentapeptide (lipid intermediate I) to form undecaprenyl-pyrophosphoryl-MurNAc-(pentapeptide)GlcNAc (lipid intermediate II). This is UDP-N-acetylglucosamine--N-acetylmuramyl-(pentapeptide) pyrophosphoryl-undecaprenol N-acetylglucosamine transferase from Streptococcus pyogenes serotype M5 (strain Manfredo).